The following is a 172-amino-acid chain: Large ribosomal subunit protein uL10 (172 aa).

Belongs to the universal ribosomal protein uL10 family. In terms of assembly, part of the ribosomal stalk of the 50S ribosomal subunit. The N-terminus interacts with L11 and the large rRNA to form the base of the stalk. The C-terminus forms an elongated spine to which L12 dimers bind in a sequential fashion forming a multimeric L10(L12)X complex.

Forms part of the ribosomal stalk, playing a central role in the interaction of the ribosome with GTP-bound translation factors. The polypeptide is Large ribosomal subunit protein uL10 (rplJ) (Liberibacter africanus subsp. capensis).